Reading from the N-terminus, the 376-residue chain is ATP phosphoribosyltransferase regulatory subunit (376 aa).

This sequence belongs to the class-II aminoacyl-tRNA synthetase family. HisZ subfamily. In terms of assembly, heteromultimer composed of HisG and HisZ subunits.

It localises to the cytoplasm. It functions in the pathway amino-acid biosynthesis; L-histidine biosynthesis; L-histidine from 5-phospho-alpha-D-ribose 1-diphosphate: step 1/9. Required for the first step of histidine biosynthesis. May allow the feedback regulation of ATP phosphoribosyltransferase activity by histidine. This is ATP phosphoribosyltransferase regulatory subunit from Brucella canis (strain ATCC 23365 / NCTC 10854 / RM-666).